The following is a 396-amino-acid chain: Digeranylgeranylglycerophospholipid reductase (396 aa).

The FAD site is built by Gly-14, Glu-33, Cys-44, Gly-45, Gly-47, Arg-100, Ala-124, Glu-162, Asp-283, Gly-295, and Ile-296. A 2,3-bis-O-(geranylgeranyl)-sn-glycerol 1-phospholipid contacts are provided by Lys-338 and Val-374.

Belongs to the geranylgeranyl reductase family. DGGGPL reductase subfamily. It depends on FAD as a cofactor.

It catalyses the reaction 2,3-bis-O-(phytanyl)-sn-glycerol 1-phosphate + 8 NADP(+) = 2,3-bis-O-(geranylgeranyl)-sn-glycerol 1-phosphate + 8 NADPH + 8 H(+). The catalysed reaction is 2,3-bis-O-(phytanyl)-sn-glycerol 1-phosphate + 8 NAD(+) = 2,3-bis-O-(geranylgeranyl)-sn-glycerol 1-phosphate + 8 NADH + 8 H(+). It carries out the reaction a 2,3-bis-O-phytanyl-sn-glycerol 1-phospholipid + 8 A = a 2,3-bis-O-(geranylgeranyl)-sn-glycerol 1-phospholipid + 8 AH2. The enzyme catalyses CDP-2,3-bis-O-(geranylgeranyl)-sn-glycerol + 8 AH2 = CDP-2,3-bis-O-(phytanyl)-sn-glycerol + 8 A. It catalyses the reaction archaetidylserine + 8 AH2 = 2,3-bis-O-phytanyl-sn-glycero-3-phospho-L-serine + 8 A. Its pathway is membrane lipid metabolism; glycerophospholipid metabolism. Is involved in the reduction of 2,3-digeranylgeranylglycerophospholipids (unsaturated archaeols) into 2,3-diphytanylglycerophospholipids (saturated archaeols) in the biosynthesis of archaeal membrane lipids. Catalyzes the formation of archaetidic acid (2,3-di-O-phytanyl-sn-glyceryl phosphate) from 2,3-di-O-geranylgeranylglyceryl phosphate (DGGGP) via the hydrogenation of each double bond of the isoprenoid chains. Is also probably able to reduce double bonds of geranyl groups in CDP-2,3-bis-O-(geranylgeranyl)-sn-glycerol and archaetidylserine, thus acting at various stages in the biosynthesis of archaeal membrane lipids. This is Digeranylgeranylglycerophospholipid reductase from Thermoplasma volcanium (strain ATCC 51530 / DSM 4299 / JCM 9571 / NBRC 15438 / GSS1).